A 508-amino-acid polypeptide reads, in one-letter code: Cobyric acid synthase (508 aa).

In terms of domain architecture, GATase cobBQ-type spans 255-454 (ELNIAVLKLP…LHGVFESGPW (200 aa)). Cysteine 336 (nucleophile) is an active-site residue. The active site involves histidine 446.

Belongs to the CobB/CobQ family. CobQ subfamily.

Its pathway is cofactor biosynthesis; adenosylcobalamin biosynthesis. In terms of biological role, catalyzes amidations at positions B, D, E, and G on adenosylcobyrinic A,C-diamide. NH(2) groups are provided by glutamine, and one molecule of ATP is hydrogenolyzed for each amidation. This Synechococcus sp. (strain CC9311) protein is Cobyric acid synthase.